The following is a 570-amino-acid chain: L-ascorbate oxidase (570 aa).

A signal peptide spans 1 to 18 (MGMWWIVAVAILAHTASA). Plastocyanin-like domains follow at residues 33–140 (WPDC…IIDV) and 154–317 (FNLL…LNYV). Disulfide bonds link cysteine 36–cysteine 219, cysteine 98–cysteine 557, and cysteine 197–cysteine 211. The Cu cation site is built by histidine 77 and histidine 79. N-linked (GlcNAc...) asparagine glycosylation is present at asparagine 109. Positions 121 and 123 each coordinate Cu cation. Residue asparagine 196 is glycosylated (N-linked (GlcNAc...) asparagine). N-linked (GlcNAc...) asparagine glycans are attached at residues asparagine 229, asparagine 343, asparagine 384, asparagine 407, asparagine 434, asparagine 442, and asparagine 458. Residues 426–543 (RNRNAKQGNV…MGMGVVFAEG (118 aa)) enclose the Plastocyanin-like 3 domain. Cu cation is bound by residues histidine 463, histidine 466, histidine 468, histidine 525, cysteine 526, histidine 527, histidine 531, and methionine 536.

Belongs to the multicopper oxidase family. Dimer. Requires Cu cation as cofactor.

Its subcellular location is the secreted. It catalyses the reaction 4 L-ascorbate + O2 = 4 monodehydro-L-ascorbate radical + 2 H2O. Its pathway is cofactor degradation; L-ascorbate degradation. Ascorbate oxidase involved in a redox system involving ascorbic acid (AsA). The oxidation of AsA represses responses to high salinity and oxidative stress conditions such as vegetative growth and seed production reductions. Negative regulator of defense responses toward incompatible Turnip mosaic virus (TuMV strain UK1) by preventing jasmonic acid (JA)- dependent accumulation of ascorbic acid (AsA, AS) and dehydroascobic acid (DHA). This chain is L-ascorbate oxidase, found in Brassica rapa subsp. pekinensis (Chinese cabbage).